A 461-amino-acid chain; its full sequence is Glycerol-3-phosphate acyltransferase, chloroplastic (461 aa).

A chloroplast-targeting transit peptide spans 1–96 (MSMTGSSAYY…SPPNMSASVS (96 aa)). The segment covering 47 to 76 (LLSSTSSSSSSSISLRSSTAPSPSCSSVTP) has biased composition (low complexity). The disordered stretch occupies residues 47 to 88 (LLSSTSSSSSSSISLRSSTAPSPSCSSVTPKDNCLASAKHSP). An HXXXXD motif motif is present at residues 231 to 236 (HQTEAD).

It belongs to the GPAT/DAPAT family.

It localises to the plastid. The protein resides in the chloroplast stroma. It catalyses the reaction sn-glycerol 3-phosphate + an acyl-CoA = a 1-acyl-sn-glycero-3-phosphate + CoA. Its pathway is phospholipid metabolism; CDP-diacylglycerol biosynthesis; CDP-diacylglycerol from sn-glycerol 3-phosphate: step 1/3. Esterifies acyl-group from acyl-ACP to the sn-1 position of glycerol-3-phosphate. The enzyme from chilling-resistant plants discriminates against non-fluid palmitic acid and selects oleic acid whereas the enzyme from sensitive plants accepts both fatty acids. The sequence is that of Glycerol-3-phosphate acyltransferase, chloroplastic (PLSB) from Phaseolus vulgaris (Kidney bean).